We begin with the raw amino-acid sequence, 185 residues long: Elongation factor P (185 aa).

It belongs to the elongation factor P family.

Its subcellular location is the cytoplasm. Its pathway is protein biosynthesis; polypeptide chain elongation. Its function is as follows. Involved in peptide bond synthesis. Stimulates efficient translation and peptide-bond synthesis on native or reconstituted 70S ribosomes in vitro. Probably functions indirectly by altering the affinity of the ribosome for aminoacyl-tRNA, thus increasing their reactivity as acceptors for peptidyl transferase. In Burkholderia ambifaria (strain MC40-6), this protein is Elongation factor P.